The following is a 95-amino-acid chain: Putative RelE-like toxin protein (95 aa).

It belongs to the RelE toxin family.

Functionally, toxic component of a type II toxin-antitoxin (TA) system. The chain is Putative RelE-like toxin protein from Escherichia coli.